The chain runs to 392 residues: MMILTKNKPMIVSMGPHHPSMHGVLRLIVTLDGEDVLDCEPVLGYLHRGMEKIAENRTIVQYLPYVTRWDYLATMFTEAITVNAPEKLTNIQVPKRASYIRIIMLELSRIASHLLWLGPFMADIGAQTPFFYIFREREMIYDLFESATGMRMMHNYFRIGGVAVDLPYGWIDKCLDFCDYFLPKINEYERLITNNPIFLKRVEGIGTVTREEAINWGLSGPMLRASGVQWDLRKVDHYECYDELDWKIQWQKEGDSLARYLVRIGEMKESVKIIQQALKAIPGGPFENLEARRLNQGKNSEWNLFEYQFISKKPSPTFKLPKQEHYVRVEAPKGELGIFLIGDDSVFPWRLKIRSPGFINLQILPQLVKGMKLADIMTILGSIDIIMGEVDR.

This sequence belongs to the complex I 49 kDa subunit family. In terms of assembly, NDH is composed of at least 16 different subunits, 5 of which are encoded in the nucleus.

The protein localises to the plastid. It localises to the chloroplast thylakoid membrane. The enzyme catalyses a plastoquinone + NADH + (n+1) H(+)(in) = a plastoquinol + NAD(+) + n H(+)(out). It catalyses the reaction a plastoquinone + NADPH + (n+1) H(+)(in) = a plastoquinol + NADP(+) + n H(+)(out). NDH shuttles electrons from NAD(P)H:plastoquinone, via FMN and iron-sulfur (Fe-S) centers, to quinones in the photosynthetic chain and possibly in a chloroplast respiratory chain. The immediate electron acceptor for the enzyme in this species is believed to be plastoquinone. Couples the redox reaction to proton translocation, and thus conserves the redox energy in a proton gradient. This chain is NAD(P)H-quinone oxidoreductase subunit H, chloroplastic, found in Marchantia polymorpha (Common liverwort).